A 417-amino-acid polypeptide reads, in one-letter code: Dibenzothiophene monooxygenase (417 aa).

FMN-binding positions include Tyr-96, Asn-129–Asn-134, Lys-159–Ser-163, Arg-282, Ala-369–Arg-370, and His-391. Residues Ser-131–Lys-142 are lid loop.

It belongs to the DszC flavin monooxygenase family. In terms of assembly, homotetramer. Homodimer. FAD is required as a cofactor. Requires NADH as cofactor.

It localises to the cytoplasm. It catalyses the reaction dibenzothiophene + 2 FMNH2 + 2 O2 = dibenzothiophene 5,5-dioxide + 2 FMN + 2 H2O + 2 H(+). The enzyme catalyses dibenzothiophene + FMNH2 + O2 = dibenzothiophene 5-oxide + FMN + H2O + H(+). The catalysed reaction is dibenzothiophene 5-oxide + FMNH2 + O2 = dibenzothiophene 5,5-dioxide + FMN + H2O + H(+). It functions in the pathway sulfur metabolism; dibenzothiophene degradation. Functionally, catalyzes the first step of the '4S' desulfurization pathway that removes covalently bound sulfur from dibenzothiophene (DBT) without breaking carbon-carbon bonds. Sulfur dioxygenase which converts DBT to DBT-sulfone (DBTO2 or DBT 5,5-dioxide) in a stepwise manner. In DBTO (dibenzothiophene-5-oxide) was reported not to be a substrate, in it is reported to be a substrate. Can also use benzyl sulfide and benzyl sulfoxide as substrates, although benzyl sulfoxide is a poor substrate. The pathway substrate specificity has been augmented using mutagenesis, however no mutations allowed use of alkylated thiophenes. The chain is Dibenzothiophene monooxygenase from Rhodococcus qingshengii.